Consider the following 337-residue polypeptide: MKISAALILSSLSSVAFSAPAPAPADSHHEDHHKDEKPAVVTVTQYIDSNAATSTVESAATTTTLSSSEKDTSEQKRDGGFQDGTVKCSDFPSVNGIVSLDWLGFGGWASVMDMDANTSSECKDGYYCSYACEPGMSKTQWPSDQPSDGKSVGGLYCKNGYLYRTNTDTSDLCSTDETSAKAINKKSDSIALCRTDYPGSENMVIPTVVDGGDSQPISVVDEDTYYQWQGKKTSAQYYINNAGVSAEDGCIWGTSGSDVGNWAPLVLGAGSTNGETYLSLIPNPNSNQAANFNVKIVASDGANVQGSCAYEDGSFTGDGSDGCTVSVLSGSAEFVFY.

Residues 57–67 (ESAATTTTLSS) are compositionally biased toward low complexity. The segment at 57 to 84 (ESAATTTTLSSSEKDTSEQKRDGGFQDG) is disordered. A compositionally biased stretch (basic and acidic residues) spans 68-80 (SEKDTSEQKRDGG).

Belongs to the SUN family.

It is found in the mitochondrion. Functionally, involved in the mitochondrial expression of subunits 6 and 8 of the F0-F1 ATP synthase. This Saccharomyces cerevisiae (strain ATCC 204508 / S288c) (Baker's yeast) protein is Beta-glucosidase-like protein NCA3, mitochondrial (NCA3).